Here is a 1036-residue protein sequence, read N- to C-terminus: MMKFRFRRQGADPQREKLKQELFAFHKTVEHGFPNQPSALAFDPELRIMAIGTRSGAVKIYGAPGVEFTGLHRDAATVTQMHFLPGQGRLLTLLDDSSLHLWEIIHHNGCAHLEEGLSFHPPSRPSFDNASFPASLTRVTVVLLVAGNTAALGTESGSIFFLDVATLALLEGQTLSPDVVLRSVPDDYRCGKALGPVESLQGHLQDPSKILIGYSRGLLVIWSQATQSVDNVFLGNQQLESLCWGRDGSSIISSHSDGSYAIWSTDTGSPPTLQPTVVTTPYGPFPCKAINKILWRSCESGDHFIIFSGGMPRASYGDRHCVSVLRAETLVTLDFTSRVIDFFTVHSTQPEDECDNPQALAVLLEEELVVLDLQTPGWPAVPAPYLAPLHSSAITCSAHVANVPSKLWARIVSAGEQQSPQPASSALSWPITGGRNLAQEPSQRGLLLTGHEDGTVRFWDASGVALRPLYKLSTAGLFQTDCEHADSLAQAVEDDWPPFRKVGCFDPYSDDPRLGIQKVALCKYTAQMVVAGTAGQVLVLELSEVPAEHAVSVANVDLLQDREGFTWKGHERLNPHTGLLPWPAGFQPRMLIQCLPPAAVTAVTLHAEWSLVAFGTSHGFGLFDYQRKSPVLARCTLHPNDSLAMEGPLSRVKSLKKSLRQSFRRIRKSRVSGKKRTPAASSKLQEANAQLAEQTCPHDLEMTPVQRRIEPRSADDSLSGVVRCLYFADTFLRDATHHGPTMWAGTNSGSVFAYALEVPAATAGGEKRPEQAVEAVLGKEVQLMHRAPVVAIAVLDGRGRPLPEPYEASRDLAQAPDMQGGHAVLIASEEQFKVFTLPKVSAKTKFKLTAHEGCRVRKVALATFASVMSEDYAETCLACLTNLGDVHVFSVPGLRPQVHYSCIRKEDISGIASCVFTRHGQGFYLISPSEFERFSLSARNITEPLCSLDISWPQNATQPRLQESPKLSQANGTRDIILAPESCEGSPSSAHSKRADTMEPPEAALSPVSIDSAASGDTMLDTTGDVTVEYVKDFLG.

10 WD repeats span residues 38–71, 78–119, 139–175, 199–233, 239–271, 289–331, 339–373, 395–473, 517–592, and 601–662; these read SALAFDPELRIMAIGTRSGAVKIYGAPGVEFTGL, VTQM…GLSF, VTVVLLVAGNTAALGTESGSIFFLDVATLALLEGQTL, SLQGHLQDPSKILIGYSRGLLVIWSQATQSVDNVF, LESLCWGRDGSSIISSHSDGSYAIWSTDTGSPP, AINK…ETLV, VIDFFTVHSTQPEDECDNPQALAVLLEEELVVLDL, TCSA…YKLS, QKVA…RMLI, and TAVT…LRQS. Phosphoserine is present on Ser662. Over residues 667 to 677 the composition is skewed to basic residues; the sequence is RKSRVSGKKRT. A disordered region spans residues 667–688; sequence RKSRVSGKKRTPAASSKLQEAN. The span at 679–688 shows a compositional bias: polar residues; it reads AASSKLQEAN. WD repeat units lie at residues 722–782, 791–843, 848–901, and 915–938; these read VRCL…KEVQ, AIAV…VSAK, LTAH…VHYS, and VFTRHGQGFYLISPSEFERFSLSA. Thr957 is modified (phosphothreonine). A phosphoserine mark is found at Ser964, Ser982, and Ser989. The disordered stretch occupies residues 980–1002; that stretch reads PESCEGSPSSAHSKRADTMEPPE.

The protein belongs to the WD repeat L(2)GL family. As to quaternary structure, associated with nonmuscle myosin II heavy chain. Interacts with PRKCI/aPKC, PARD6B/Par-6 and PARD6A. Interacts with STX4A. Interacts with RAB10 (GDP-bound form); the interaction is direct and promotes RAB10 association with membranes and activation through competition with the Rab inhibitor GDI1. Interacts with DCAF1. Post-translationally, phosphorylated by PRKCI on at least one of the following Ser residues: Ser 654, Ser-658, Ser-662, Ser-669 and Ser-672. Phosphorylation is important for appropriated cell polarization.

Its subcellular location is the early endosome membrane. The protein localises to the golgi apparatus. The protein resides in the trans-Golgi network membrane. It localises to the golgi apparatus membrane. It is found in the cell projection. Its subcellular location is the axon. The protein localises to the cytoplasm. The protein resides in the cytoskeleton. Cortical cytoskeleton protein found in a complex involved in maintaining cell polarity and epithelial integrity. Involved in the regulation of mitotic spindle orientation, proliferation, differentiation and tissue organization of neuroepithelial cells. Involved in axonogenesis through RAB10 activation thereby regulating vesicular membrane trafficking toward the axonal plasma membrane. In Mus musculus (Mouse), this protein is Lethal(2) giant larvae protein homolog 1 (Llgl1).